The chain runs to 354 residues: Glycine betaine/proline betaine transport system permease protein ProW (354 aa).

The segment at 1–41 (MADQNNPWDTTPAADSAAQSADAWGTPTTAPTDGGGADWLT) is disordered. Topologically, residues 1–99 (MADQNNPWDT…VDYILNGFQQ (99 aa)) are cytoplasmic. The segment covering 13-32 (AADSAAQSADAWGTPTTAPT) has biased composition (low complexity). A helical transmembrane segment spans residues 100 to 120 (LLLGMPAPVAIIVFALIAWQI). Serine 121 is a topological domain (periplasmic). Residues 122-142 (GVGMGVATLVSLIAIGAIGAW) traverse the membrane as a helical segment. Over 143–148 (SQAMVT) the chain is Cytoplasmic. The ABC transmembrane type-1 domain occupies 145–324 (AMVTLALVLT…ILAIILDRLT (180 aa)). Residues 149–169 (LALVLTALLFCIVIGLPLGIW) traverse the membrane as a helical segment. The Periplasmic segment spans residues 170–198 (LARSPRAAKIIRPLLDAMQTTPAFVYLVP). Residues 199-219 (IVMLFGIGNVPGVVVTIIFAL) traverse the membrane as a helical segment. Topologically, residues 220–270 (PPIIRLTILGINQVPADLIEASRSFGASPRQMLFKVQLPLAMPTIMAGVNQ) are cytoplasmic. A helical membrane pass occupies residues 271-291 (TLMLALSMVVIASMIAVGGLG). Residues 292-300 (QMVLRGIGR) are Periplasmic-facing. A helical membrane pass occupies residues 301–321 (LDMGLATVGGVGIVILAIILD). At 322-354 (RLTQAVGRDSRSRGNRRWYTTGPVGLLTRPFIK) the chain is on the cytoplasmic side.

Belongs to the binding-protein-dependent transport system permease family. CysTW subfamily. The complex is composed of two ATP-binding proteins (ProV), two transmembrane proteins (ProW) and a solute-binding protein (ProX).

The protein resides in the cell inner membrane. In terms of biological role, part of the ProU ABC transporter complex involved in glycine betaine and proline betaine uptake. Probably responsible for the translocation of the substrate across the membrane. The sequence is that of Glycine betaine/proline betaine transport system permease protein ProW from Escherichia coli (strain K12).